A 717-amino-acid polypeptide reads, in one-letter code: DNA ligase (717 aa).

NAD(+) contacts are provided by residues 44–48 (DADYD), 93–94 (SL), and Glu-127. Lys-129 functions as the N6-AMP-lysine intermediate in the catalytic mechanism. NAD(+) contacts are provided by Arg-150, Glu-186, Lys-302, and Lys-326. Zn(2+)-binding residues include Cys-431, Cys-434, Cys-455, and Cys-461. The BRCT domain occupies 639–717 (STDSPVAGKT…EDEWLALIGG (79 aa)).

This sequence belongs to the NAD-dependent DNA ligase family. LigA subfamily. Mg(2+) serves as cofactor. Mn(2+) is required as a cofactor.

It catalyses the reaction NAD(+) + (deoxyribonucleotide)n-3'-hydroxyl + 5'-phospho-(deoxyribonucleotide)m = (deoxyribonucleotide)n+m + AMP + beta-nicotinamide D-nucleotide.. DNA ligase that catalyzes the formation of phosphodiester linkages between 5'-phosphoryl and 3'-hydroxyl groups in double-stranded DNA using NAD as a coenzyme and as the energy source for the reaction. It is essential for DNA replication and repair of damaged DNA. The protein is DNA ligase of Sinorhizobium fredii (strain NBRC 101917 / NGR234).